Reading from the N-terminus, the 214-residue chain is 14-3-3 protein homolog 2 (214 aa).

The protein belongs to the 14-3-3 family.

The sequence is that of 14-3-3 protein homolog 2 from Schistosoma mansoni (Blood fluke).